Reading from the N-terminus, the 285-residue chain is Protoheme IX farnesyltransferase (285 aa).

The next 9 helical transmembrane spans lie at 13–33, 40–60, 89–109, 110–130, 137–157, 165–185, 194–214, 218–238, and 265–285; these read LGKLGVVSLLDLAAVAGAFLA, LLPIIPMFIGGTLASMGAMII, EAIIVGSLLAILGTALGFIDN, ILTAFFIALGVVIYIFVYTIL, LNIVIGGFAGSAAAWAGYTSL, GFLLGFLIFMWTPGHFWSLAL, AHYPMLPAVVGITTSARAIAI, LMIPIVLLLGYYINLIALIAF, and FIFSNIYLMLILLIMIIVKLI.

It belongs to the UbiA prenyltransferase family. Protoheme IX farnesyltransferase subfamily.

The protein localises to the cell membrane. It carries out the reaction heme b + (2E,6E)-farnesyl diphosphate + H2O = Fe(II)-heme o + diphosphate. The protein operates within porphyrin-containing compound metabolism; heme O biosynthesis; heme O from protoheme: step 1/1. Converts heme B (protoheme IX) to heme O by substitution of the vinyl group on carbon 2 of heme B porphyrin ring with a hydroxyethyl farnesyl side group. The polypeptide is Protoheme IX farnesyltransferase (Saccharolobus islandicus (strain Y.G.57.14 / Yellowstone #1) (Sulfolobus islandicus)).